A 443-amino-acid chain; its full sequence is ATP-dependent protease ATPase subunit HslU (443 aa).

Residues Ile-20, 62–67 (GVGKTE), Asp-255, Glu-321, and Arg-393 each bind ATP.

It belongs to the ClpX chaperone family. HslU subfamily. A double ring-shaped homohexamer of HslV is capped on each side by a ring-shaped HslU homohexamer. The assembly of the HslU/HslV complex is dependent on binding of ATP.

It localises to the cytoplasm. Functionally, ATPase subunit of a proteasome-like degradation complex; this subunit has chaperone activity. The binding of ATP and its subsequent hydrolysis by HslU are essential for unfolding of protein substrates subsequently hydrolyzed by HslV. HslU recognizes the N-terminal part of its protein substrates and unfolds these before they are guided to HslV for hydrolysis. This chain is ATP-dependent protease ATPase subunit HslU, found in Helicobacter pylori (strain ATCC 700392 / 26695) (Campylobacter pylori).